We begin with the raw amino-acid sequence, 286 residues long: Lipoyl synthase (286 aa).

Residues C38, C43, C49, C64, C68, C71, and S276 each contribute to the [4Fe-4S] cluster site. The region spanning 50–265 is the Radical SAM core domain; the sequence is WEQGVATFMI…ENIALDMGFL (216 aa).

This sequence belongs to the radical SAM superfamily. Lipoyl synthase family. Requires [4Fe-4S] cluster as cofactor.

It localises to the cytoplasm. It carries out the reaction [[Fe-S] cluster scaffold protein carrying a second [4Fe-4S](2+) cluster] + N(6)-octanoyl-L-lysyl-[protein] + 2 oxidized [2Fe-2S]-[ferredoxin] + 2 S-adenosyl-L-methionine + 4 H(+) = [[Fe-S] cluster scaffold protein] + N(6)-[(R)-dihydrolipoyl]-L-lysyl-[protein] + 4 Fe(3+) + 2 hydrogen sulfide + 2 5'-deoxyadenosine + 2 L-methionine + 2 reduced [2Fe-2S]-[ferredoxin]. It participates in protein modification; protein lipoylation via endogenous pathway; protein N(6)-(lipoyl)lysine from octanoyl-[acyl-carrier-protein]: step 2/2. Catalyzes the radical-mediated insertion of two sulfur atoms into the C-6 and C-8 positions of the octanoyl moiety bound to the lipoyl domains of lipoate-dependent enzymes, thereby converting the octanoylated domains into lipoylated derivatives. The sequence is that of Lipoyl synthase from Karelsulcia muelleri (strain GWSS) (Sulcia muelleri).